The following is a 107-amino-acid chain: uncharacterized protein (107 aa).

Residues methionine 1–serine 20 form the signal peptide.

This is an uncharacterized protein from Listeria monocytogenes serovar 1/2a (strain ATCC BAA-679 / EGD-e).